The sequence spans 470 residues: 3-isopropylmalate dehydratase large subunit (470 aa).

The [4Fe-4S] cluster site is built by Cys-349, Cys-409, and Cys-412.

This sequence belongs to the aconitase/IPM isomerase family. LeuC type 1 subfamily. Heterodimer of LeuC and LeuD. Requires [4Fe-4S] cluster as cofactor.

It carries out the reaction (2R,3S)-3-isopropylmalate = (2S)-2-isopropylmalate. The protein operates within amino-acid biosynthesis; L-leucine biosynthesis; L-leucine from 3-methyl-2-oxobutanoate: step 2/4. Functionally, catalyzes the isomerization between 2-isopropylmalate and 3-isopropylmalate, via the formation of 2-isopropylmaleate. The sequence is that of 3-isopropylmalate dehydratase large subunit from Methylobacterium radiotolerans (strain ATCC 27329 / DSM 1819 / JCM 2831 / NBRC 15690 / NCIMB 10815 / 0-1).